The following is a 218-amino-acid chain: Embryonic polyadenylate-binding protein 2-B (218 aa).

Disordered regions lie at residues 1 to 24 and 169 to 218; these read MSERVSEEPGLDKGDRAEECELDD and RTNM…NNPY. The region spanning 93–170 is the RRM domain; the sequence is RSVYVGNVDY…RTIKVLPKRT (78 aa). Residues 198–209 are compositionally biased toward basic residues; sequence QRPRGRPFRGRG.

Homodimer; Upon poly(A) binding, undergoes a dimer-monomer transition that removes the polyproline motif from the RNA recognition site and allows it to be replaced by the adenosine nucleotides of poly(A).

The protein localises to the cytoplasm. Binds the poly(A) tail of mRNA. Unable to interact with the cap-binding complex and is therefore unlikely to be involved in translation initiation. The chain is Embryonic polyadenylate-binding protein 2-B (Pabpn1l-b) from Xenopus laevis (African clawed frog).